The following is a 164-amino-acid chain: uncharacterized protein (164 aa).

The region spanning Met-1–Ile-129 is the BFN domain.

This is an uncharacterized protein from Mycobacterium tuberculosis (strain CDC 1551 / Oshkosh).